The chain runs to 362 residues: Protein Tob1 (362 aa).

The Bipartite nuclear localization signal signature appears at 22–39 (RRRVNIFGEELERLLKKK). Positions 82–92 (VRGNLPQDLSV) are important for nuclear localization. The span at 144 to 160 (DPASSVSSSPSPPFGHS) shows a compositional bias: low complexity. Residues 144 to 171 (DPASSVSSSPSPPFGHSAAVSPTFMPRS) form a disordered region. Positions 161–220 (AAVSPTFMPRSTQPLTFTTATFAATKFGSTKMKNSGRSSKVARTSPINLGLTVNVNDLLK) are required for interaction with CPEB3. Thr-204 carries the post-translational modification Phosphothreonine. A Nuclear export signal motif is present at residues 228–236 (VHSLYGLGL). A disordered region spans residues 234 to 284 (LGLGSQQQPQPQPQQQQQQQPSSSQPPPPLPQQQQQQPQQQQQQQQQTSAL). Low complexity-rich tracts occupy residues 238–256 (SQQQ…QPSS) and 265–280 (QQQQ…QQQQ).

Belongs to the BTG family. As to quaternary structure, interacts with ERBB2. Interacts with CNOT7. Interacts with CPEB3 (via C-terminal RNA-binding region); recruits CNOT7 to CPEB3 to form a ternary complex required for mRNA deadenylation and decay. Interacts with CNOT8. Interacts with CPEB4. In terms of processing, phosphorylated on Ser and Thr residues. Ubiquitous.

The protein localises to the cytoplasm. It is found in the nucleus. Anti-proliferative protein; the function is mediated by association with deadenylase subunits of the CCR4-NOT complex. Mediates CPEB3-accelerated mRNA deadenylation by binding to CPEB3 and recruiting CNOT7 which leads to target mRNA deadenylation and decay. In Mus musculus (Mouse), this protein is Protein Tob1 (Tob1).